Here is a 380-residue protein sequence, read N- to C-terminus: Putative F-box/kelch-repeat protein At2g44030 (380 aa).

Positions 16-66 (PKSFLSLPYDVVFNCLSRVSRTHDPILSLVSKSFRSLLALPDLEAERFRIL) constitute an F-box domain. 2 Kelch repeats span residues 123–170 (EIYL…VIDG) and 172–219 (INVY…ALIK).

The polypeptide is Putative F-box/kelch-repeat protein At2g44030 (Arabidopsis thaliana (Mouse-ear cress)).